Here is an 88-residue protein sequence, read N- to C-terminus: Cold-regulated protein BLT14 (88 aa).

In Hordeum vulgare (Barley), this protein is Cold-regulated protein BLT14 (BLT14).